Consider the following 146-residue polypeptide: MYAWTDGACRGNPGPGGWGVVLRYRGHERTLHGGEPHTTNNRMELTAAIQALEALDRPCVVHLTTDSQYVRKGITEWMAGWKRRGWRTAARKPVLNEDLWRRLDALNQRHEVHWHWVRGHSGHAENEQADALANRGIDEMQEAGAT.

Residues 1 to 138 (MYAWTDGACR…ADALANRGID (138 aa)) form the RNase H type-1 domain. Asp6, Glu44, Asp66, and Asp130 together coordinate Mg(2+).

The protein belongs to the RNase H family. In terms of assembly, monomer. Mg(2+) serves as cofactor.

It localises to the cytoplasm. The enzyme catalyses Endonucleolytic cleavage to 5'-phosphomonoester.. Its function is as follows. Endonuclease that specifically degrades the RNA of RNA-DNA hybrids. This is Ribonuclease H from Alkalilimnicola ehrlichii (strain ATCC BAA-1101 / DSM 17681 / MLHE-1).